A 108-amino-acid chain; its full sequence is Small ribosomal subunit protein bS16 (108 aa).

This sequence belongs to the bacterial ribosomal protein bS16 family.

The chain is Small ribosomal subunit protein bS16 from Orientia tsutsugamushi (strain Boryong) (Rickettsia tsutsugamushi).